The chain runs to 223 residues: Small ribosomal subunit protein uS3 (223 aa).

In terms of domain architecture, KH type-2 spans Ile38–Lys106.

Belongs to the universal ribosomal protein uS3 family. As to quaternary structure, part of the 30S ribosomal subunit. Forms a tight complex with proteins S10 and S14.

In terms of biological role, binds the lower part of the 30S subunit head. Binds mRNA in the 70S ribosome, positioning it for translation. The sequence is that of Small ribosomal subunit protein uS3 from Lactobacillus delbrueckii subsp. bulgaricus (strain ATCC 11842 / DSM 20081 / BCRC 10696 / JCM 1002 / NBRC 13953 / NCIMB 11778 / NCTC 12712 / WDCM 00102 / Lb 14).